The chain runs to 100 residues: MKISEEEVRHVAALSKLSFSESETIEFATTLSKIVDMVELLNEVDTTGVAITTTMADKKNIMRADIAETGVDRKFLFQNVPEKENHFIKVPAILDDGGDA.

Belongs to the GatC family. In terms of assembly, heterotrimer of A, B and C subunits.

The enzyme catalyses L-glutamyl-tRNA(Gln) + L-glutamine + ATP + H2O = L-glutaminyl-tRNA(Gln) + L-glutamate + ADP + phosphate + H(+). The catalysed reaction is L-aspartyl-tRNA(Asn) + L-glutamine + ATP + H2O = L-asparaginyl-tRNA(Asn) + L-glutamate + ADP + phosphate + 2 H(+). In terms of biological role, allows the formation of correctly charged Asn-tRNA(Asn) or Gln-tRNA(Gln) through the transamidation of misacylated Asp-tRNA(Asn) or Glu-tRNA(Gln) in organisms which lack either or both of asparaginyl-tRNA or glutaminyl-tRNA synthetases. The reaction takes place in the presence of glutamine and ATP through an activated phospho-Asp-tRNA(Asn) or phospho-Glu-tRNA(Gln). The sequence is that of Aspartyl/glutamyl-tRNA(Asn/Gln) amidotransferase subunit C from Streptococcus equi subsp. zooepidemicus (strain H70).